Here is a 103-residue protein sequence, read N- to C-terminus: Small ribosomal subunit protein uS10 (103 aa).

This sequence belongs to the universal ribosomal protein uS10 family. As to quaternary structure, part of the 30S ribosomal subunit.

Involved in the binding of tRNA to the ribosomes. This chain is Small ribosomal subunit protein uS10, found in Ruthia magnifica subsp. Calyptogena magnifica.